Reading from the N-terminus, the 372-residue chain is Glutamate 5-kinase (372 aa).

An ATP-binding site is contributed by K14. Positions 54, 141, and 153 each coordinate substrate. 173–174 (TD) serves as a coordination point for ATP. The 79-residue stretch at 280-358 (RGTLVLDAGA…DAIEKLLGYV (79 aa)) folds into the PUA domain.

This sequence belongs to the glutamate 5-kinase family.

It localises to the cytoplasm. It carries out the reaction L-glutamate + ATP = L-glutamyl 5-phosphate + ADP. The protein operates within amino-acid biosynthesis; L-proline biosynthesis; L-glutamate 5-semialdehyde from L-glutamate: step 1/2. In terms of biological role, catalyzes the transfer of a phosphate group to glutamate to form L-glutamate 5-phosphate. In Ectopseudomonas mendocina (strain ymp) (Pseudomonas mendocina), this protein is Glutamate 5-kinase.